We begin with the raw amino-acid sequence, 227 residues long: Protein LppM (227 aa).

An N-terminal signal peptide occupies residues 1-24 (MARTRRRGMLAIAMLLMLVPLATG). Cys-25 carries the N-palmitoyl cysteine lipid modification. A lipid anchor (S-diacylglycerol cysteine) is attached at Cys-25. The important for bacterial uptake by host macrophages stretch occupies residues 26 to 185 (LRVRASITIS…ARYTDPNTRS (160 aa)). A helical transmembrane segment spans residues 190–210 (GIWLGIAAFAAAGVVAVLAWI).

A shorter form (about 20 kDa) is secreted; upon overexpression of the whole protein in M.smegmatis the C-terminus of the short form is about residue 187, suggesting it is generated by cleavage of the protein before its C-terminal transmembrane domain.

The protein localises to the membrane. Its subcellular location is the secreted. The protein resides in the cell wall. Its function is as follows. A putative lipoprotein that seems to be specialized for the initial steps of macrophage infection. A non-acylated fragment (residues 26-185) binds phosphatidyl-myo-inositol mannosides (PIMs). Limits, in a TLR2-dependent fashion, bacterial uptake by host (mouse); this effect may be mediated by nonacylated fragment 26-185. Plays a TLR2-dependent role in host phagosome maturation arrest. Plays a TLR2-independent role in chemokine production during the first 24 hours of mouse infection. The chain is Protein LppM (lppM) from Mycobacterium tuberculosis (strain ATCC 25618 / H37Rv).